A 352-amino-acid polypeptide reads, in one-letter code: MIRQAIARVVEGQNLKESDMIEVMNQIMGGEATPAQIGALIVALRMKGETVEEITGAARVMRDHATPVRVGRVLDIDREEINLDQETMAAVLDTCGTGGSGTKSFNISTTVAFVVAACGVKVAKHGNRSVSSMCGSADVLEALGVHLDIGVDTVERCIAEEGIGFLFAPALHGAMRYAIGPRREIGIRTIFNILGPLTNPAGADRQVLGVYREDLVATLADVLCRLGCRRGFVVHGMDGMDEVTLTAPTRIADIREGRYSLSTIAPEDYGLQRCRLEDLAGGDARHNAELVRGILAGEAGPRRDIVLLNSAFALVAAGKADSIEDGMRAAAQAIDEHAALAKLNALIRMTQP.

5-phospho-alpha-D-ribose 1-diphosphate contacts are provided by residues G96, G99–S100, S104, N106–T109, K124–S132, and S136. Position 96 (G96) interacts with anthranilate. S108 contacts Mg(2+). Residue N127 coordinates anthranilate. R182 contacts anthranilate. Residues D241 and E242 each contribute to the Mg(2+) site.

Belongs to the anthranilate phosphoribosyltransferase family. In terms of assembly, homodimer. Mg(2+) serves as cofactor.

The enzyme catalyses N-(5-phospho-beta-D-ribosyl)anthranilate + diphosphate = 5-phospho-alpha-D-ribose 1-diphosphate + anthranilate. Its pathway is amino-acid biosynthesis; L-tryptophan biosynthesis; L-tryptophan from chorismate: step 2/5. Functionally, catalyzes the transfer of the phosphoribosyl group of 5-phosphorylribose-1-pyrophosphate (PRPP) to anthranilate to yield N-(5'-phosphoribosyl)-anthranilate (PRA). The polypeptide is Anthranilate phosphoribosyltransferase (Syntrophotalea carbinolica (strain DSM 2380 / NBRC 103641 / GraBd1) (Pelobacter carbinolicus)).